The following is a 176-amino-acid chain: CDP-archaeol synthase (176 aa).

4 helical membrane-spanning segments follow: residues 41-61 (GLIG…FLYN), 73-93 (IITV…KSYF), 114-134 (VVGS…LNWF), and 138-158 (FDSV…SPLL).

It belongs to the CDP-archaeol synthase family. It depends on Mg(2+) as a cofactor.

It localises to the cell membrane. The enzyme catalyses 2,3-bis-O-(geranylgeranyl)-sn-glycerol 1-phosphate + CTP + H(+) = CDP-2,3-bis-O-(geranylgeranyl)-sn-glycerol + diphosphate. It participates in membrane lipid metabolism; glycerophospholipid metabolism. Its function is as follows. Catalyzes the formation of CDP-2,3-bis-(O-geranylgeranyl)-sn-glycerol (CDP-archaeol) from 2,3-bis-(O-geranylgeranyl)-sn-glycerol 1-phosphate (DGGGP) and CTP. This reaction is the third ether-bond-formation step in the biosynthesis of archaeal membrane lipids. The protein is CDP-archaeol synthase of Methanocorpusculum labreanum (strain ATCC 43576 / DSM 4855 / Z).